We begin with the raw amino-acid sequence, 261 residues long: Indole-3-glycerol phosphate synthase (261 aa).

This sequence belongs to the TrpC family.

It carries out the reaction 1-(2-carboxyphenylamino)-1-deoxy-D-ribulose 5-phosphate + H(+) = (1S,2R)-1-C-(indol-3-yl)glycerol 3-phosphate + CO2 + H2O. The protein operates within amino-acid biosynthesis; L-tryptophan biosynthesis; L-tryptophan from chorismate: step 4/5. In Alkaliphilus metalliredigens (strain QYMF), this protein is Indole-3-glycerol phosphate synthase.